A 1296-amino-acid chain; its full sequence is MKQQTEVKKRFKMYKAKKHWVVAPILFIGVLGVVGLATDDVQAAELDTQPGTTTVQPDNPDPQVGSTTPKTAVTEEATVQKDTTSQPTKVEEVASEKNGAEQSSATPNDTTNAQQPTVGAEKSAQEQPVVSPETTNEPLGQPTEVAPAENEANKSTSIPKEFETPDVDKAVDEAKKDPNITVVEKPAEDLGNVSSKDLAAKEKEVDQLQKEQAKKIAQQAAELKAKNEKIAKENAEIAAKNKAEKERYEKEVAEYNKHKNENGYVAKPVNKTLIFDREATKNSKVVSVKAAEYIDAKKLTDKHKDKKLLISMLSVDSSGLTTKDSKKAHFYYNNGAGGTLVVLHKNQPVTITYGNLNASYLGKKIASAEFQYTVKATPDSKGRLNAFLHDDPVATIVYGINIDPRTKKAGAEIEMLVRFFGEDGKEILPTKENPFVFSGASLNSRGENITYEFVKVGNTDTVHEINGSKVARHGNKVYSKTDIDVGTNGISISDWEAVQGKEYIGATVISTPNRIKFTFGNEIVNNPGYDGNSMWFAFNTDLKAKSITPYQEKGRPKQPEKATIEFNRYKANVVPVLVPNKEVTDGQKNINDLNVKRGDSLQYIVTGDTTELAKVDPKTVTKQGIRDTFDAEKVTIDLSKVKVYQADASLNEKDLKAVAAAINSGKAKDVTASYDLHLDQNTVTAMMKTNADDSVVLAMGYKYLLVLPFVVKNVEGDFENTAVQLTNDGETVTNTVINHVPGSNPSKDVKADKNGTVGSVSLHDKDIPLQTKIYYEVKSSERPANYGGITEEWGMNDVLDTTHDRFTGKWHAITNYDLKVGDKTLKAGTDISAYILLENKDNKDLTFTMNQALLAALNEGSNKVGKQAWSVYLEVERIKTGDVENTQTENYNKELVRSNTVVTHTPDDPKPTKAVHNKKGEDINHGKVARGDVLSYEMTWDLKGYDKDFAFDTVDLATGVSFFDDYDETKVTPIKDLLRVKDSKGEDITNQFTISWDDAKGTVTISAKDPQAFILAHGGQELRVTLPTKVKANVSGDVYNLAEQNTFGQRIKTNTVVNHIPKVNPKKDVVIKVGDKQSQNGATIKLGEKFFYEFTSSDIPAEYAGIVEEWSISDKLDVKHDKFSGQWSVFANSTFVLADGTKVNKGDDISKLFTMTFEQGVVKITASQAFLDAMNLKENKNVAHSWKAFIGVERIAAGDVYNTIEESFNNEKIKTNTVVTHTPEKPQTPPEKTVIVPPTPKTPQAPVEPLVVEKASVVPELPQTGEKQNVLLTVAGSLAAMLGLAGLGFKRRKETK.

The first 43 residues, 1–43, serve as a signal peptide directing secretion; sequence MKQQTEVKKRFKMYKAKKHWVVAPILFIGVLGVVGLATDDVQA. 2 disordered regions span residues 48 to 188 and 1221 to 1245; these read TQPG…KPAE and HTPE…TPQA. Basic and acidic residues predominate over residues 89–99; the sequence is KVEEVASEKNG. 2 stretches are compositionally biased toward polar residues: residues 100–117 and 125–138; these read AEQS…QQPT and QEQP…TNEP. Residues 160–178 are compositionally biased toward basic and acidic residues; that stretch reads KEFETPDVDKAVDEAKKDP. Positions 1261–1265 match the LPXTG sorting signal motif; it reads LPQTG. T1264 bears the Pentaglycyl murein peptidoglycan amidated threonine mark. The propeptide at 1265–1296 is removed by sortase; sequence GEKQNVLLTVAGSLAAMLGLAGLGFKRRKETK.

This sequence belongs to the antigen I/II family.

The protein localises to the secreted. The protein resides in the cell wall. In terms of biological role, aggregation substance allows donor and recipient strains to form tight aggregates which allow the non-motile bacteria to maintain physical contact over a period of time sufficient to permit conjugative transfer of the sex pheromone plasmid from donor to recipient strains. This Enterococcus faecalis (strain ATCC 700802 / V583) protein is Aggregation substance (asa1).